Consider the following 464-residue polypeptide: Aspartyl protease 37 (464 aa).

Residues methionine 1–cysteine 19 form the signal peptide. A glycan (N-linked (GlcNAc...) asparagine) is linked at asparagine 41. Positions tyrosine 89–valine 456 constitute a Peptidase A1 domain. Aspartate 107 is an active-site residue. A disulfide bridge connects residues cysteine 117 and cysteine 123. Asparagine 174 and asparagine 261 each carry an N-linked (GlcNAc...) asparagine glycan. Residues threonine 299–proline 311 are compositionally biased toward low complexity. The segment at threonine 299–proline 319 is disordered. N-linked (GlcNAc...) asparagine glycosylation occurs at asparagine 320. Aspartate 337 is a catalytic residue. Cysteine 376 and cysteine 420 are joined by a disulfide.

It belongs to the peptidase A1 family.

Its function is as follows. Anther-specific aspartic protease involved in tapetal programmed cell death (PCD). Directly regulated by the transcription factor EAT1/DTD in anthers during tapetum PCD and degeneration. In Oryza sativa subsp. japonica (Rice), this protein is Aspartyl protease 37.